A 1440-amino-acid chain; its full sequence is Pentatricopeptide repeat-containing protein At3g18110, chloroplastic (1440 aa).

Residues 1–44 constitute a chloroplast transit peptide; it reads MAVSAGALAFPALSVRATLNPEIKDEQANISSTTSSSQKFTYSR. Over residues 63–72 the composition is skewed to polar residues; sequence TPSQTLSSPV. The tract at residues 63-84 is disordered; it reads TPSQTLSSPVSPIAGTPDSGDV. PPR repeat units follow at residues 224–258, 259–295, 296–330, 331–365, 366–400, 401–431, 437–471, 472–506, 507–541, 542–572, 608–638, 643–678, 680–714, 715–749, 751–785, 786–820, 821–855, 856–890, 891–925, 926–960, 961–995, 996–1030, 1031–1065, 1066–1100, and 1101–1135; these read RVQV…GCVP, DLIS…GLRP, DAIT…RCQP, DLWT…GFFP, DAVT…GFGK, DEMT…MKGL, DAIT…GIKP, TLQT…GTKP, DNLA…GHTP, SYTL…MEEL, ENDT…LKEH, KRLI…GWCF, SSTM…GCEA, SESV…GFHF, CSPM…GRTP, DLKT…GPSP, TVES…GFKI, SKSS…GYLP, TIRL…NFKV, ELAI…GLEP, DETT…GLDP, KLDT…GLKL, DRSF…GIEP, TLAT…EVEL, and TTLP…GLEP. The segment at 1419-1440 is disordered; sequence KKKKMGNETNGINTRRKFVRSK.

It belongs to the PPR family. P subfamily.

Its subcellular location is the plastid. The protein resides in the chloroplast. May play a role in embryogenesis. This chain is Pentatricopeptide repeat-containing protein At3g18110, chloroplastic (EMB1270), found in Arabidopsis thaliana (Mouse-ear cress).